A 101-amino-acid polypeptide reads, in one-letter code: Small ribosomal subunit protein uS14 (101 aa).

The disordered stretch occupies residues 46 to 72 (FELNRQPRDASPVRVRNRDSRDGRPRG). The segment covering 61–70 (RNRDSRDGRP) has biased composition (basic and acidic residues).

It belongs to the universal ribosomal protein uS14 family. In terms of assembly, part of the 30S ribosomal subunit. Contacts proteins S3 and S10.

Binds 16S rRNA, required for the assembly of 30S particles and may also be responsible for determining the conformation of the 16S rRNA at the A site. The polypeptide is Small ribosomal subunit protein uS14 (Corynebacterium diphtheriae (strain ATCC 700971 / NCTC 13129 / Biotype gravis)).